The chain runs to 336 residues: Nucleoid-associated protein ECA2747 (336 aa).

Residues 317–336 (KGTPPNLRDQLQRRTSGGKQ) form a disordered region.

The protein belongs to the YejK family.

The protein resides in the cytoplasm. Its subcellular location is the nucleoid. This Pectobacterium atrosepticum (strain SCRI 1043 / ATCC BAA-672) (Erwinia carotovora subsp. atroseptica) protein is Nucleoid-associated protein ECA2747.